Here is a 310-residue protein sequence, read N- to C-terminus: Tagatose-6-phosphate kinase (310 aa).

The protein belongs to the carbohydrate kinase PfkB family. LacC subfamily.

The catalysed reaction is D-tagatofuranose 6-phosphate + ATP = D-tagatofuranose 1,6-bisphosphate + ADP + H(+). The protein operates within carbohydrate metabolism; D-tagatose 6-phosphate degradation; D-glyceraldehyde 3-phosphate and glycerone phosphate from D-tagatose 6-phosphate: step 1/2. The polypeptide is Tagatose-6-phosphate kinase (Staphylococcus aureus (strain USA300 / TCH1516)).